Consider the following 149-residue polypeptide: Calmodulin-1 (149 aa).

Ala-2 carries the post-translational modification N-acetylalanine. EF-hand domains follow at residues 8-43, 44-79, 81-116, and 117-149; these read DQISEFKEAFSLFDKDGDGCITTKELGTVMRSLGQN, PTEAELQDMINEVDADGNGTIDFPEFLNLMARKMKD, DSEEELKEAFRVFDKDQNGFISAAELRHVMTNLGEK, and LTDEEVDEMIREADVDGDGQINYEEFVKVMMAK. Asp-21, Asp-23, Asp-25, Cys-27, Glu-32, Asp-57, Asp-59, Asn-61, Thr-63, Glu-68, Asp-94, Asp-96, Asn-98, and Glu-105 together coordinate Ca(2+). The residue at position 116 (Lys-116) is an N6,N6,N6-trimethyllysine. Residues Asp-130, Asp-132, Asp-134, Gln-136, and Glu-141 each contribute to the Ca(2+) site.

The protein belongs to the calmodulin family.

In terms of biological role, calmodulin mediates the control of a large number of enzymes, ion channels and other proteins by Ca(2+). Among the enzymes to be stimulated by the calmodulin-Ca(2+) complex are a number of protein kinases and phosphatases. In Petunia hybrida (Petunia), this protein is Calmodulin-1 (CAM81).